We begin with the raw amino-acid sequence, 770 residues long: Amyloid-beta precursor protein (770 aa).

The signal sequence occupies residues 1-17; the sequence is MLPSLALLLLAAWTVRA. Topologically, residues 18-701 are extracellular; sequence LEVPTDGNAG…AEDVGSNKGA (684 aa). Positions 28–123 are GFLD subdomain; that stretch reads LLAEPQIAMF…PYRCLVGEFV (96 aa). The E1 domain maps to 28–189; the sequence is LLAEPQIAMF…RGVEFVCCPL (162 aa). 6 cysteine pairs are disulfide-bonded: C38–C62, C73–C117, C98–C105, C133–C187, C144–C174, and C158–C186. 96–110 is a heparin binding site; sequence NWCKRGRKQCKTHTH. The interval 131 to 189 is cuBD subdomain; sequence DKCKFLHQERMDVCETHLHWHTVAKETCSEKSTNLHDYGMLLPCGIDKFRGVEFVCCPL. The tract at residues 135–155 is copper-binding; it reads FLHQERMDVCETHLHWHTVAK. Cu(2+) contacts are provided by H147, H151, and Y168. The zinc-binding stretch occupies residues 181 to 188; the sequence is GVEFVCCP. 3 residues coordinate Zn(2+): E183, C186, and C187. The segment covering 196-207 has biased composition (acidic residues); that stretch reads IDSADAEEDDSD. The tract at residues 196–283 is disordered; sequence IDSADAEEDD…TTTTTTTESV (88 aa). At S198 the chain carries Phosphoserine; by CK2. Phosphoserine; by CK1 is present on S206. A sulfotyrosine mark is found at Y217 and Y262. Over residues 228 to 264 the composition is skewed to acidic residues; the sequence is VAEEEEVADVEEEEAEDDEDVEDGDEVEEEAEEPYEE. Residues 268-281 are compositionally biased toward low complexity; it reads RTTSIATTTTTTTE. Intrachain disulfides connect C291–C341, C300–C324, and C316–C337. In terms of domain architecture, BPTI/Kunitz inhibitor spans 291–341; it reads CSEQAETGPCRAMISRWYFDVTEGKCAPFFYGGCGGNRNNFDTEEYCMAVC. Y336 bears the Sulfotyrosine mark. Residues 344–365 carry the OX-2 motif; sequence VSSQSLLKTTSEPLPQDPVKLP. Residues 374–565 enclose the E2 domain; that stretch reads AVDKYLETPG…EEIQDEVDEL (192 aa). Positions 391–423 are heparin-binding; sequence FQKAKERLEAKHRERMSQVMREWEEAERQAKNL. Phosphoserine is present on S441. The tract at residues 491–522 is heparin-binding; it reads FNMLKKYVRAEQKDRQHTLKHFEHVRMVDPKK. The residue at position 497 (Y497) is a Phosphotyrosine. A collagen-binding region spans residues 523–540; the sequence is AAQIRSQVMTHLRVIYER. N542 and N571 each carry an N-linked (GlcNAc...) asparagine glycan. S656 carries O-linked (Xyl...) (chondroitin sulfate) serine; in L-APP isoforms glycosylation. H677 and H685 together coordinate Cu(2+). 2 residues coordinate Zn(2+): H677 and H685. Positions 695 to 722 are interaction with PSEN1; it reads VGSNKGAIIGLMVGGVVIATVIVITLVM. A helical transmembrane segment spans residues 702–722; that stretch reads IIGLMVGGVVIATVIVITLVM. Over 723-770 the chain is Cytoplasmic; sequence LKKKQYTSIHHGVVEVDAAVTPEERHLSKMQQNGYENPTYKFFEQMQN. A Basolateral sorting signal motif is present at residues 724-734; sequence KKKQYTSIHHG. Residue T729 is modified to Phosphothreonine. S730 is subject to Phosphoserine; by APP-kinase I. The tract at residues 732-751 is interaction with G(o)-alpha; it reads HHGVVEVDAAVTPEERHLSK. T743 carries the phosphothreonine; by CDK5 and MAPK10 modification. The segment at 756 to 770 is required for the interaction with KIF5B and for anterograde transport in axons; it reads GYENPTYKFFEQMQN. Y757 is subject to Phosphotyrosine; by ABL1. Positions 757–762 match the YENPXY motif; contains endocytosis signal motif; it reads YENPTY. Residue K763 forms a Glycyl lysine isopeptide (Lys-Gly) (interchain with G-Cter in ubiquitin) linkage.

This sequence belongs to the APP family. As to quaternary structure, binds, via its C-terminus, to the PID domain of several cytoplasmic proteins, including APBB family members, the APBA family, MAPK8IP1, SHC1 and NUMB and DAB1. Binding to DAB1 inhibits its serine phosphorylation. Interacts (via NPXY motif) with DAB2 (via PID domain); the interaction is impaired by tyrosine phosphorylation of the NPXY motif. Also interacts with GPCR-like protein BPP, APPBP1, IB1, KNS2 (via its TPR domains), APPBP2 (via BaSS) and DDB1. In vitro, it binds MAPT via the MT-binding domains. Associates with microtubules in the presence of ATP and in a kinesin-dependent manner. Interacts, through a C-terminal domain, with GNAO1. Amyloid-beta protein 42 binds CHRNA7 in hippocampal neurons. Amyloid-beta associates with HADH2. Interacts with CPEB1, ANKS1B and AGER. Interacts with ITM2B. Interacts with ITM2C. Interacts with IDE. Can form homodimers; dimerization is enhanced in the presence of Cu(2+) ions. Can form homodimers; this is promoted by heparin binding. Amyloid-beta protein 40 interacts with S100A9. CTF-alpha product of APP interacts with GSAP. Isoform APP695 interacts with SORL1 (via N-terminal ectodomain); this interaction retains APP in the trans-Golgi network and reduces processing into soluble APP-alpha and amyloid-beta peptides. The C99 fragment also interacts with SORL1. Isoform APP751 interacts with SORL1. Isoform APP770 interacts with SORL1. Interacts with PLD3. Interacts with VDAC1. Interacts with NSG1; could regulate APP processing. Amyloid-beta protein 42 interacts with FPR2. Interacts with SYT7. Interacts (via transmembrane region) with PSEN1; the interaction is direct. Interacts with LRRK2. Interacts (via cytoplasmic domain) with KIF5B. Interacts (via C-terminus) with APBB2/FE65L1 (via C-terminus). Interacts (via intracellular domain) with APBB3. Proteolytically processed under normal cellular conditions. Cleavage either by alpha-secretase, beta-secretase or theta-secretase leads to generation and extracellular release of soluble APP peptides, S-APP-alpha and S-APP-beta, and the retention of corresponding membrane-anchored C-terminal fragments, C80, C83 and C99. Subsequent processing of C80 and C83 by gamma-secretase yields P3 peptides. This is the major secretory pathway and is non-amyloidogenic. Alternatively, presenilin/nicastrin-mediated gamma-secretase processing of C99 releases the amyloid-beta proteins, amyloid-beta protein 40 and amyloid-beta protein 42, major components of amyloid plaques, and the cytotoxic C-terminal fragments, gamma-CTF(50), gamma-CTF(57) and gamma-CTF(59). PSEN1 cleavage is more efficient with C83 than with C99 as substrate (in vitro). Amyloid-beta protein 40 and Amyloid-beta protein 42 are cleaved by ACE. Many other minor amyloid-beta peptides, amyloid-beta 1-X peptides, are found in cerebral spinal fluid (CSF) including the amyloid-beta X-15 peptides, produced from the cleavage by alpha-secretase. Post-translationally, proteolytically cleaved by caspases during neuronal apoptosis. Cleavage at Asp-739 by either caspase-3, -8 or -9 results in the production of the neurotoxic C31 peptide and the increased production of amyloid-beta peptides. In terms of processing, N-glycosylated. O-glycosylated. O-linkage of chondroitin sulfate to the L-APP isoforms produces the APP proteoglycan core proteins, the appicans. The chondroitin sulfate chain of appicans contains 4-O-sulfated galactose in the linkage region and chondroitin sulfate E in the repeated disaccharide region. Post-translationally, phosphorylation in the C-terminal on tyrosine, threonine and serine residues is neuron-specific. Phosphorylation can affect APP processing, neuronal differentiation and interaction with other proteins. Phosphorylated on Thr-743 in neuronal cells by Cdc5 kinase and Mapk10, in dividing cells by Cdc2 kinase in a cell-cycle dependent manner with maximal levels at the G2/M phase and, in vitro, by GSK-3-beta. The Thr-743 phosphorylated form causes a conformational change which reduces binding of Fe65 family members. In dopaminergic (DA) neurons, phosphorylation on Thr-743 by LRKK2 promotes the production and the nuclear translocation of the APP intracellular domain (AICD) which induces DA neuron apoptosis. Phosphorylation on Tyr-757 is required for SHC binding. Phosphorylated in the extracellular domain by casein kinases on both soluble and membrane-bound APP. This phosphorylation is inhibited by heparin. In terms of processing, extracellular binding and reduction of copper, results in a corresponding oxidation of Cys-144 and Cys-158, and the formation of a disulfide bond. Trophic-factor deprivation triggers the cleavage of surface APP by beta-secretase to release sAPP-beta which is further cleaved to release an N-terminal fragment of APP (N-APP). Post-translationally, amyloid-beta peptides are degraded by IDE. In terms of processing, sulfated on tyrosine residues. In terms of tissue distribution, expressed in the brain. In the brain, non-L-APP isoforms are expressed in neurons, isoform APP695 being the predominant form. In astrocytes and microglial cells, almost 50% is L-isoform (appican).

It is found in the cell membrane. The protein resides in the membrane. Its subcellular location is the perikaryon. It localises to the cell projection. The protein localises to the growth cone. It is found in the clathrin-coated pit. The protein resides in the early endosome. Its subcellular location is the cytoplasmic vesicle. It localises to the endoplasmic reticulum. The protein localises to the golgi apparatus. It is found in the cell surface. The protein resides in the nucleus. Its subcellular location is the cytoplasm. It localises to the secreted. Functions as a cell surface receptor and performs physiological functions on the surface of neurons relevant to neurite growth, neuronal adhesion and axonogenesis. Interaction between APP molecules on neighboring cells promotes synaptogenesis. Involved in cell mobility and transcription regulation through protein-protein interactions. Can promote transcription activation through binding to APBB1-KAT5 and inhibit Notch signaling through interaction with Numb. Couples to apoptosis-inducing pathways such as those mediated by G(o) and JIP. Inhibits G(o)-alpha ATPase activity. Acts as a kinesin I membrane receptor, mediating the axonal transport of beta-secretase and presenilin 1. By acting as a kinesin I membrane receptor, plays a role in axonal anterograde transport of cargo towards synapses in axons. May be involved in copper homeostasis/oxidative stress through copper ion reduction. Can regulate neurite outgrowth through binding to components of the extracellular matrix such as heparin and collagen I and IV. The splice isoforms that contain the BPTI domain possess protease inhibitor activity. Induces a AGER-dependent pathway that involves activation of p38 MAPK, resulting in internalization of amyloid-beta peptide and leading to mitochondrial dysfunction in cultured mitochondrial dysfunction in cultured cortical neurons. Provides Cu(2+) ions for GPC1 which are required for release of nitric oxide (NO) and subsequent degradation of the heparan sulfate chains on GPC1. Functionally, amyloid-beta peptides are lipophilic metal chelators with metal-reducing activity. Binds transient metals such as copper, zinc and iron. Rat and mouse amyloid-beta peptides bind only weakly transient metals and have little reducing activity due to substitutions of transient metal chelating residues. Amyloid-beta protein 42 may activate mononuclear phagocytes in the brain and elicits inflammatory responses. Promotes both tau aggregation and TPK II-mediated phosphorylation. Also binds GPC1 in lipid rafts. Its function is as follows. Appicans elicit adhesion of neural cells to the extracellular matrix and may regulate neurite outgrowth in the brain. In terms of biological role, the gamma-CTF peptides as well as the caspase-cleaved peptides, including C31, are potent enhancers of neuronal apoptosis. This chain is Amyloid-beta precursor protein, found in Rattus norvegicus (Rat).